The primary structure comprises 780 residues: Zinc finger protein GLIS3 (780 aa).

Composition is skewed to polar residues over residues 80 to 92 (PSLS…QNGT) and 106 to 115 (VSGNSVSNSL). Disordered stretches follow at residues 80–148 (PSLS…KKRA) and 290–315 (PSAL…HLHH). Basic residues predominate over residues 135–148 (SATRAHSTRSKKRA). A compositionally biased stretch (pro residues) spans 293 to 308 (LPLPLPPPQGPPPPYH). The C2H2-type 1 zinc-finger motif lies at 345 to 370 (HCCRWIDCSALYDQQEELVRHIEKVH). The C2H2-type 2; atypical zinc-finger motif lies at 379 to 406 (FTCFWTGCPRRYKPFNARYKLLIHMRVH). 3 C2H2-type zinc fingers span residues 412–436 (NKCT…LRSH), 442–466 (YLCQ…QRTH), and 472–496 (YACQ…VKAH). 2 disordered regions span residues 485–512 (DPSS…SSTE) and 527–670 (LQPA…QPNG). Residues 490 to 506 (RKHVKAHSSREQQARKK) carry the Bipartite nuclear localization signal motif. A compositionally biased stretch (basic and acidic residues) spans 497–512 (SSREQQARKKLRSSTE). Over residues 567-577 (HSTRSGTAAGA) the composition is skewed to low complexity. Positions 593–605 (VQGSPHNPSSQLP) are enriched in polar residues.

It belongs to the GLI C2H2-type zinc-finger protein family. As to expression, in the embryo, expressed at high levels in the kidney and testis. In the adult, expressed at high levels in the kidney and uterus and at lower levels in the brain, lung, skeletal muscle and pancreas.

It is found in the nucleus. Its function is as follows. Acts both as a repressor and activator of transcription. Binds to the consensus sequence 5'-GACCACCCAC-3'. The protein is Zinc finger protein GLIS3 of Mus musculus (Mouse).